Here is a 93-residue protein sequence, read N- to C-terminus: Small ribosomal subunit protein uS19c (93 aa).

The protein belongs to the universal ribosomal protein uS19 family.

The protein localises to the plastid. It localises to the chloroplast. Functionally, protein S19 forms a complex with S13 that binds strongly to the 16S ribosomal RNA. The sequence is that of Small ribosomal subunit protein uS19c from Brachypodium distachyon (Purple false brome).